A 94-amino-acid chain; its full sequence is Acylphosphatase (94 aa).

Positions 8–94 constitute an Acylphosphatase-like domain; it reads TLFIIVHGKV…GRRFKHFAQH (87 aa). Active-site residues include R23 and N41. The segment at 69-94 is disordered; it reads PPAASVTELESRREDGGRRFKHFAQH. A compositionally biased stretch (basic and acidic residues) spans 77–86; sequence LESRREDGGR.

This sequence belongs to the acylphosphatase family.

The catalysed reaction is an acyl phosphate + H2O = a carboxylate + phosphate + H(+). The polypeptide is Acylphosphatase (acyP) (Bordetella avium (strain 197N)).